A 337-amino-acid polypeptide reads, in one-letter code: Ribosomal RNA small subunit methyltransferase C (337 aa).

Belongs to the methyltransferase superfamily. RsmC family. As to quaternary structure, monomer.

It is found in the cytoplasm. It carries out the reaction guanosine(1207) in 16S rRNA + S-adenosyl-L-methionine = N(2)-methylguanosine(1207) in 16S rRNA + S-adenosyl-L-homocysteine + H(+). Its function is as follows. Specifically methylates the guanine in position 1207 of 16S rRNA in the 30S particle. In Proteus mirabilis (strain HI4320), this protein is Ribosomal RNA small subunit methyltransferase C.